We begin with the raw amino-acid sequence, 101 residues long: NAD(P)H-quinone oxidoreductase subunit 4L, chloroplastic (101 aa).

3 helical membrane-spanning segments follow: residues 2–22 (MLEY…YGLI), 32–52 (MCLE…SDLF), and 61–81 (IFSI…PAIV).

Belongs to the complex I subunit 4L family. NDH is composed of at least 16 different subunits, 5 of which are encoded in the nucleus.

It localises to the plastid. The protein resides in the chloroplast thylakoid membrane. It carries out the reaction a plastoquinone + NADH + (n+1) H(+)(in) = a plastoquinol + NAD(+) + n H(+)(out). The enzyme catalyses a plastoquinone + NADPH + (n+1) H(+)(in) = a plastoquinol + NADP(+) + n H(+)(out). Functionally, NDH shuttles electrons from NAD(P)H:plastoquinone, via FMN and iron-sulfur (Fe-S) centers, to quinones in the photosynthetic chain and possibly in a chloroplast respiratory chain. The immediate electron acceptor for the enzyme in this species is believed to be plastoquinone. Couples the redox reaction to proton translocation, and thus conserves the redox energy in a proton gradient. The chain is NAD(P)H-quinone oxidoreductase subunit 4L, chloroplastic from Acorus calamus var. americanus (American sweet flag).